We begin with the raw amino-acid sequence, 107 residues long: Large ribosomal subunit protein uL24 (107 aa).

It belongs to the universal ribosomal protein uL24 family. Part of the 50S ribosomal subunit.

One of two assembly initiator proteins, it binds directly to the 5'-end of the 23S rRNA, where it nucleates assembly of the 50S subunit. Functionally, one of the proteins that surrounds the polypeptide exit tunnel on the outside of the subunit. The chain is Large ribosomal subunit protein uL24 from Streptomyces griseus subsp. griseus (strain JCM 4626 / CBS 651.72 / NBRC 13350 / KCC S-0626 / ISP 5235).